An 86-amino-acid polypeptide reads, in one-letter code: Large ribosomal subunit protein bL31B (86 aa).

Belongs to the bacterial ribosomal protein bL31 family. Type B subfamily. Part of the 50S ribosomal subunit.

In Streptococcus agalactiae serotype III (strain NEM316), this protein is Large ribosomal subunit protein bL31B.